The sequence spans 358 residues: Alanine racemase (358 aa).

Lys34 (proton acceptor; specific for D-alanine) is an active-site residue. An N6-(pyridoxal phosphate)lysine modification is found at Lys34. Arg130 contributes to the substrate binding site. Tyr254 (proton acceptor; specific for L-alanine) is an active-site residue. Met302 is a substrate binding site.

Belongs to the alanine racemase family. It depends on pyridoxal 5'-phosphate as a cofactor.

The enzyme catalyses L-alanine = D-alanine. The protein operates within amino-acid biosynthesis; D-alanine biosynthesis; D-alanine from L-alanine: step 1/1. In terms of biological role, catalyzes the interconversion of L-alanine and D-alanine. May also act on other amino acids. The polypeptide is Alanine racemase (alr) (Actinobacillus succinogenes (strain ATCC 55618 / DSM 22257 / CCUG 43843 / 130Z)).